Reading from the N-terminus, the 239-residue chain is Octanoyltransferase (239 aa).

One can recognise a BPL/LPL catalytic domain in the interval 48–236 (DGGDELVWLV…AFEAVFGETT (189 aa)). Residues 87–94 (RGGEYTYH), 167–169 (ALG), and 180–182 (GLS) contribute to the substrate site. The Acyl-thioester intermediate role is filled by Cys198.

Belongs to the LipB family.

It is found in the cytoplasm. The catalysed reaction is octanoyl-[ACP] + L-lysyl-[protein] = N(6)-octanoyl-L-lysyl-[protein] + holo-[ACP] + H(+). The protein operates within protein modification; protein lipoylation via endogenous pathway; protein N(6)-(lipoyl)lysine from octanoyl-[acyl-carrier-protein]: step 1/2. In terms of biological role, catalyzes the transfer of endogenously produced octanoic acid from octanoyl-acyl-carrier-protein onto the lipoyl domains of lipoate-dependent enzymes. Lipoyl-ACP can also act as a substrate although octanoyl-ACP is likely to be the physiological substrate. The polypeptide is Octanoyltransferase (Rhizobium johnstonii (strain DSM 114642 / LMG 32736 / 3841) (Rhizobium leguminosarum bv. viciae)).